Here is a 122-residue protein sequence, read N- to C-terminus: Large ribosomal subunit protein uL14 (122 aa).

The protein belongs to the universal ribosomal protein uL14 family. Part of the 50S ribosomal subunit. Forms a cluster with proteins L3 and L19. In the 70S ribosome, L14 and L19 interact and together make contacts with the 16S rRNA in bridges B5 and B8.

Binds to 23S rRNA. Forms part of two intersubunit bridges in the 70S ribosome. The sequence is that of Large ribosomal subunit protein uL14 from Mycoplasma mobile (strain ATCC 43663 / 163K / NCTC 11711) (Mesomycoplasma mobile).